We begin with the raw amino-acid sequence, 627 residues long: Protein EXECUTER 2, chloroplastic (627 aa).

Disordered stretches follow at residues 1–34 (MSAA…PSAA), 212–277 (PTKG…AKDS), and 308–359 (EAEL…SKSP). A chloroplast-targeting transit peptide spans 1–45 (MSAATACASPAAARPPLHIPLRSPPSAAHLPSAAASRRASSAACR). A compositionally biased stretch (low complexity) spans 217 to 229 (SSASSVSSATAES). 2 stretches are compositionally biased toward acidic residues: residues 308–321 (EAEL…ELVQ) and 331–353 (SLED…SDSA).

It localises to the plastid. The protein localises to the chloroplast. In terms of biological role, together with EX1, enables higher plants to perceive singlet oxygen as a stress signal in plastid that activates a genetically determined nuclear stress response program which triggers a programmed cell death (PCD). This transfer of singlet oxygen-induced stress-related signals from the plastid to the nucleus that triggers genetically controlled PCD pathway is unique to photosynthetic eukaryotes and operates under mild stress conditions, impeding photosystem II (PSII) without causing photooxidative damage of the plant. The polypeptide is Protein EXECUTER 2, chloroplastic (Oryza sativa subsp. japonica (Rice)).